The following is a 245-amino-acid chain: Venom nerve growth factor 1 (245 aa).

The N-terminal stretch at 1–18 (MSMLCYTLIIAFLIGIWA) is a signal peptide. A propeptide spanning residues 19 to 125 (APKSEDNVPL…ALNRNIRAKR (107 aa)) is cleaved from the precursor. The span at 47–66 (GLKTSRNTDQRHPAPKKAED) shows a compositional bias: basic and acidic residues. Residues 47-69 (GLKTSRNTDQRHPAPKKAEDQEL) form a disordered region. 3 cysteine pairs are disulfide-bonded: Cys139–Cys206, Cys182–Cys234, and Cys194–Cys236. N-linked (GlcNAc...) asparagine glycosylation is found at Asn148 and Asn151.

The protein belongs to the NGF-beta family. Homodimer; non-covalently linked. Expressed by the venom gland.

It is found in the secreted. Nerve growth factor is important for the development and maintenance of the sympathetic and sensory nervous systems. It stimulates division and differentiation of sympathetic and embryonic sensory neurons as well as basal forebrain cholinergic neurons in the brain. Its relevance in the snake venom is not clear. However, it has been shown to inhibit metalloproteinase-dependent proteolysis of platelet glycoprotein Ib alpha, suggesting a metalloproteinase inhibition to prevent metalloprotease autodigestion and/or protection against prey proteases. Binds a lipid between the two protein chains in the homodimer. The lipid-bound form promotes histamine relase from mouse mast cells, contrary to the lipid-free form. This is Venom nerve growth factor 1 from Tropidechis carinatus (Australian rough-scaled snake).